The chain runs to 424 residues: MATRVVVGTQWGDEGKGKYIDMLAKDSDMVVRFSGGNNAGHTIVANGVKYALHLIPSGILNEGKTCIIGNGVVVDPAVLLKEIKELNEKGISTDRLLISDRAHVIMPYHKLLDELQEKFRGENSIGTTKRGIGPCYSDKTERSGIRMCDLVDEDEFVRKVRENLKVKNLIIEKVYGGQKLDEEQVISEYLEYGRKLKEYVADVNSIIFEAIEQGKNILFEGAQATFLDLDFGTYPYVTSSNPVAGGVCTGAGVGPVFINEVYGVLKAYTSRVGAGPFPTEQNNEIGDRIRELGWEYGTTTGRPRRCGWLDLVMIKYAARVNGLTALAINHVDTIGKLPKIKLCVAYKKNGQETRNFPCSLKELAQCEPVYEEFDGWDEDISNVKSFDDLPDNAKKYLSRIEEIVGVKIKLIGVGKEREQTIVVN.

Residues 12-18 (GDEGKGK) and 40-42 (GHT) each bind GTP. Catalysis depends on D13, which acts as the Proton acceptor. Mg(2+)-binding residues include D13 and G40. Residues 13-16 (DEGK), 38-41 (NAGH), T128, R142, Q223, T238, and R302 each bind IMP. The active-site Proton donor is the H41. Substrate is bound at residue 298–304 (TTTGRPR). Residues R304, 330–332 (HVD), and 412–414 (GVG) each bind GTP.

The protein belongs to the adenylosuccinate synthetase family. Homodimer. It depends on Mg(2+) as a cofactor.

The protein localises to the cytoplasm. The catalysed reaction is IMP + L-aspartate + GTP = N(6)-(1,2-dicarboxyethyl)-AMP + GDP + phosphate + 2 H(+). The protein operates within purine metabolism; AMP biosynthesis via de novo pathway; AMP from IMP: step 1/2. Its function is as follows. Plays an important role in the de novo pathway of purine nucleotide biosynthesis. Catalyzes the first committed step in the biosynthesis of AMP from IMP. This Acetivibrio thermocellus (strain ATCC 27405 / DSM 1237 / JCM 9322 / NBRC 103400 / NCIMB 10682 / NRRL B-4536 / VPI 7372) (Clostridium thermocellum) protein is Adenylosuccinate synthetase.